We begin with the raw amino-acid sequence, 102 residues long: Large ribosomal subunit protein bL21 (102 aa).

Belongs to the bacterial ribosomal protein bL21 family. Part of the 50S ribosomal subunit. Contacts protein L20.

In terms of biological role, this protein binds to 23S rRNA in the presence of protein L20. This Pelobacter propionicus (strain DSM 2379 / NBRC 103807 / OttBd1) protein is Large ribosomal subunit protein bL21.